A 98-amino-acid polypeptide reads, in one-letter code: SPbeta prophage-derived uncharacterized protein YorB (98 aa).

The sequence is that of SPbeta prophage-derived uncharacterized protein YorB (yorB) from Bacillus subtilis (strain 168).